We begin with the raw amino-acid sequence, 333 residues long: Tetraacyldisaccharide 4'-kinase (333 aa).

57–64 provides a ligand contact to ATP; it reads IVGGAGKT.

This sequence belongs to the LpxK family.

It catalyses the reaction a lipid A disaccharide + ATP = a lipid IVA + ADP + H(+). It functions in the pathway glycolipid biosynthesis; lipid IV(A) biosynthesis; lipid IV(A) from (3R)-3-hydroxytetradecanoyl-[acyl-carrier-protein] and UDP-N-acetyl-alpha-D-glucosamine: step 6/6. Transfers the gamma-phosphate of ATP to the 4'-position of a tetraacyldisaccharide 1-phosphate intermediate (termed DS-1-P) to form tetraacyldisaccharide 1,4'-bis-phosphate (lipid IVA). This chain is Tetraacyldisaccharide 4'-kinase, found in Dechloromonas aromatica (strain RCB).